Reading from the N-terminus, the 266-residue chain is UPF0294 protein YafD (266 aa).

This sequence belongs to the UPF0294 family.

It is found in the cytoplasm. This Escherichia coli O157:H7 protein is UPF0294 protein YafD (yafD).